The primary structure comprises 340 residues: Ketol-acid reductoisomerase (NADP(+)) (340 aa).

A KARI N-terminal Rossmann domain is found at 1–182 (MRVYYDRDCD…GGGRSGIIET (182 aa)). Residues 24 to 27 (YGSQ), arginine 48, serine 51, serine 53, and 83 to 86 (DELQ) each bind NADP(+). Histidine 108 is a catalytic residue. Glycine 134 lines the NADP(+) pocket. The KARI C-terminal knotted domain occupies 183-329 (NFREECETDL…KELRGMMPWI (147 aa)). Residues aspartate 191, glutamate 195, glutamate 227, and glutamate 231 each contribute to the Mg(2+) site. Position 252 (serine 252) interacts with substrate.

It belongs to the ketol-acid reductoisomerase family. Mg(2+) is required as a cofactor.

It catalyses the reaction (2R)-2,3-dihydroxy-3-methylbutanoate + NADP(+) = (2S)-2-acetolactate + NADPH + H(+). It carries out the reaction (2R,3R)-2,3-dihydroxy-3-methylpentanoate + NADP(+) = (S)-2-ethyl-2-hydroxy-3-oxobutanoate + NADPH + H(+). The protein operates within amino-acid biosynthesis; L-isoleucine biosynthesis; L-isoleucine from 2-oxobutanoate: step 2/4. Its pathway is amino-acid biosynthesis; L-valine biosynthesis; L-valine from pyruvate: step 2/4. Functionally, involved in the biosynthesis of branched-chain amino acids (BCAA). Catalyzes an alkyl-migration followed by a ketol-acid reduction of (S)-2-acetolactate (S2AL) to yield (R)-2,3-dihydroxy-isovalerate. In the isomerase reaction, S2AL is rearranged via a Mg-dependent methyl migration to produce 3-hydroxy-3-methyl-2-ketobutyrate (HMKB). In the reductase reaction, this 2-ketoacid undergoes a metal-dependent reduction by NADPH to yield (R)-2,3-dihydroxy-isovalerate. The protein is Ketol-acid reductoisomerase (NADP(+)) of Dinoroseobacter shibae (strain DSM 16493 / NCIMB 14021 / DFL 12).